A 444-amino-acid chain; its full sequence is C4-dicarboxylate transport protein 2 (444 aa).

6 consecutive transmembrane segments (helical) span residues 23 to 43 (ILYVQVLAAIVLGVIVGWLWP), 61 to 81 (LIKMAIAPIIFCTVVSGIAHI), 95 to 115 (LVYFEVVSTFALALGLVVANV), 162 to 182 (GEILQVLLFAILFGFALMGLG), 198 to 218 (AMFGVISIVVKVAPIGAFGAM), and 236 to 256 (LIATFYLTAFLFVVVGLGIIA).

This sequence belongs to the dicarboxylate/amino acid:cation symporter (DAACS) (TC 2.A.23) family.

It localises to the cell inner membrane. Functionally, responsible for the transport of dicarboxylates such as succinate, fumarate, and malate from the periplasm across the membrane. The protein is C4-dicarboxylate transport protein 2 of Bradyrhizobium diazoefficiens (strain JCM 10833 / BCRC 13528 / IAM 13628 / NBRC 14792 / USDA 110).